We begin with the raw amino-acid sequence, 103 residues long: Gene 56 protein (103 aa).

The 95-residue stretch at W9–L103 folds into the Glutaredoxin domain.

This chain is Gene 56 protein (56), found in Mycobacterium phage L5 (Mycobacteriophage L5).